We begin with the raw amino-acid sequence, 156 residues long: Crossover junction endodeoxyribonuclease RuvC (156 aa).

Active-site residues include D7, E66, and D138. Mg(2+) contacts are provided by D7, E66, and D138.

Belongs to the RuvC family. Homodimer which binds Holliday junction (HJ) DNA. The HJ becomes 2-fold symmetrical on binding to RuvC with unstacked arms; it has a different conformation from HJ DNA in complex with RuvA. In the full resolvosome a probable DNA-RuvA(4)-RuvB(12)-RuvC(2) complex forms which resolves the HJ. Mg(2+) is required as a cofactor.

The protein resides in the cytoplasm. The catalysed reaction is Endonucleolytic cleavage at a junction such as a reciprocal single-stranded crossover between two homologous DNA duplexes (Holliday junction).. Its function is as follows. The RuvA-RuvB-RuvC complex processes Holliday junction (HJ) DNA during genetic recombination and DNA repair. Endonuclease that resolves HJ intermediates. Cleaves cruciform DNA by making single-stranded nicks across the HJ at symmetrical positions within the homologous arms, yielding a 5'-phosphate and a 3'-hydroxyl group; requires a central core of homology in the junction. The consensus cleavage sequence is 5'-(A/T)TT(C/G)-3'. Cleavage occurs on the 3'-side of the TT dinucleotide at the point of strand exchange. HJ branch migration catalyzed by RuvA-RuvB allows RuvC to scan DNA until it finds its consensus sequence, where it cleaves and resolves the cruciform DNA. This is Crossover junction endodeoxyribonuclease RuvC from Ehrlichia canis (strain Jake).